Reading from the N-terminus, the 548-residue chain is MHKGKKNYPNLITSFRMNLKKIILNHDRFSHPERWKTNALLRFTFVYIKFLFDLMIIKNPLRMVGKTYRDAVTALNSLQSNYANIMAIRQTGDRKNTMTLLEMHEWSRRIGYSASDFNKLNIVHITGTKGKGSTAAFTSSILGQYKEQLPRIGLYTSPHLKSVRERIRINGEPISEEKFAKYFFEVWDRLDSTTSSLDKFPHMIPGSKPGYFKFLTLLSFHTFIQEDCKSCVYEVGVGGELDSTNIIEKPIVCGVTLLGIDHTFMLGDTIEEIAWNKGGIFKSGAPAFTVEKQPPQGLTILKERAEERKTTLTEVPPFKQLENVKLGIAGEFQKSNASLAVMLASEILHTSNILEEKIKCSSNASIPEKFIIGLQNTKWEGRCQVLEKGKNVWYIDGAHTKDSMVAASTWFRDMVRLSKRKKILLFNQQSRDANALVNNLYSSVSPEITFDDVIFTTNVTWKSGSYSADLVSMNTSQEDVEKLKVQESLVKNWNKIDDNRAKTHVTASIEEANELIETLYDEPADIFVTGSLHLVGGLLVVFDRIDVK.

130 to 133 (GKGS) lines the ATP pocket. Mg(2+)-binding residues include Ser157, Glu234, and His262. Residues Arg382 and Asp396 each coordinate ATP.

This sequence belongs to the folylpolyglutamate synthase family. A monovalent cation is required as a cofactor.

The protein localises to the mitochondrion inner membrane. Its subcellular location is the mitochondrion matrix. The protein resides in the cytoplasm. It catalyses the reaction (6S)-5,6,7,8-tetrahydrofolyl-(gamma-L-Glu)(n) + L-glutamate + ATP = (6S)-5,6,7,8-tetrahydrofolyl-(gamma-L-Glu)(n+1) + ADP + phosphate + H(+). Its pathway is cofactor biosynthesis; tetrahydrofolylpolyglutamate biosynthesis. Its function is as follows. Catalyzes conversion of folates to polyglutamate derivatives allowing concentration of folate compounds in the cell and the intracellular retention of these cofactors, which are important substrates for most of the folate-dependent enzymes that are involved in one-carbon transfer reactions involved in purine, pyrimidine and amino acid synthesis. Required for methionine synthesis and maintenance of intact mitochondrial DNA. Involved in telomere maintenance. This Saccharomyces cerevisiae (strain RM11-1a) (Baker's yeast) protein is Folylpolyglutamate synthase.